The primary structure comprises 758 residues: 5-methyltetrahydropteroyltriglutamate--homocysteine methyltransferase (758 aa).

Residues 16-19 and K112 contribute to the 5-methyltetrahydropteroyltri-L-glutamate site; that span reads RELK. L-homocysteine is bound by residues 433–435 and E486; that span reads IGS. Residues 433-435 and E486 contribute to the L-methionine site; that span reads IGS. Residues 517-518 and W563 each bind 5-methyltetrahydropteroyltri-L-glutamate; that span reads RC. An L-homocysteine-binding site is contributed by D601. D601 lines the L-methionine pocket. A 5-methyltetrahydropteroyltri-L-glutamate-binding site is contributed by E607. Zn(2+) is bound by residues H643, C645, and E667. The active-site Proton donor is the H696. Residue C728 participates in Zn(2+) binding.

The protein belongs to the vitamin-B12 independent methionine synthase family. Zn(2+) serves as cofactor.

The enzyme catalyses 5-methyltetrahydropteroyltri-L-glutamate + L-homocysteine = tetrahydropteroyltri-L-glutamate + L-methionine. It functions in the pathway amino-acid biosynthesis; L-methionine biosynthesis via de novo pathway; L-methionine from L-homocysteine (MetE route): step 1/1. Catalyzes the transfer of a methyl group from 5-methyltetrahydrofolate to homocysteine resulting in methionine formation. This Neisseria meningitidis serogroup B (strain ATCC BAA-335 / MC58) protein is 5-methyltetrahydropteroyltriglutamate--homocysteine methyltransferase.